Here is a 278-residue protein sequence, read N- to C-terminus: Mediator of RNA polymerase II transcription subunit 18 (278 aa).

This sequence belongs to the Mediator complex subunit 18 family. As to quaternary structure, component of the Mediator complex.

The protein localises to the nucleus. Its function is as follows. Component of the Mediator complex, a coactivator involved in the regulated transcription of nearly all RNA polymerase II-dependent genes. Mediator functions as a bridge to convey information from gene-specific regulatory proteins to the basal RNA polymerase II transcription machinery. Mediator is recruited to promoters by direct interactions with regulatory proteins and serves as a scaffold for the assembly of a functional preinitiation complex with RNA polymerase II and the general transcription factors. This chain is Mediator of RNA polymerase II transcription subunit 18 (srb5), found in Aspergillus clavatus (strain ATCC 1007 / CBS 513.65 / DSM 816 / NCTC 3887 / NRRL 1 / QM 1276 / 107).